The sequence spans 475 residues: Sulfate adenylyltransferase subunit 1 (475 aa).

The tr-type G domain maps to 25-239 (KSLLRFLTCG…EVLETVEIQR (215 aa)). Residues 34-41 (GSVDDGKS) form a G1 region. 34 to 41 (GSVDDGKS) serves as a coordination point for GTP. The interval 92–96 (GITID) is G2. A G3 region spans residues 113–116 (DTPG). Residues 113-117 (DTPGH) and 168-171 (NKMD) contribute to the GTP site. The G4 stretch occupies residues 168–171 (NKMD). The segment at 206–208 (SAL) is G5.

Belongs to the TRAFAC class translation factor GTPase superfamily. Classic translation factor GTPase family. CysN/NodQ subfamily. In terms of assembly, heterodimer composed of CysD, the smaller subunit, and CysN.

The catalysed reaction is sulfate + ATP + H(+) = adenosine 5'-phosphosulfate + diphosphate. It participates in sulfur metabolism; hydrogen sulfide biosynthesis; sulfite from sulfate: step 1/3. Functionally, with CysD forms the ATP sulfurylase (ATPS) that catalyzes the adenylation of sulfate producing adenosine 5'-phosphosulfate (APS) and diphosphate, the first enzymatic step in sulfur assimilation pathway. APS synthesis involves the formation of a high-energy phosphoric-sulfuric acid anhydride bond driven by GTP hydrolysis by CysN coupled to ATP hydrolysis by CysD. The polypeptide is Sulfate adenylyltransferase subunit 1 (Escherichia coli (strain 55989 / EAEC)).